A 365-amino-acid chain; its full sequence is Transmembrane protein 25 (365 aa).

Positions 1 to 26 (MELPLSQATLRHTLLLLPALLSSGQG) are cleaved as a signal peptide. Topologically, residues 27–232 (ELAPQIDGQT…APGLLATRIE (206 aa)) are extracellular. Residues 30-123 (PQIDGQTWAE…SGRPANASVI (94 aa)) form the Ig-like domain. A disulfide bridge connects residues Cys-52 and Cys-107. Asn-106, Asn-162, Asn-192, and Asn-205 each carry an N-linked (GlcNAc...) asparagine glycan. A helical transmembrane segment spans residues 233-253 (VPLLGIVVAGGLALGTLVGFS). Residues 254 to 365 (TLVACLVCRK…SSVSSDEIWL (112 aa)) are Cytoplasmic-facing.

As to quaternary structure, interacts with GRIN2B. Expressed throughout the brain with higher levels within the hippocampus.

It localises to the late endosome. The protein localises to the lysosome. It is found in the cell membrane. Its subcellular location is the secreted. Functionally, in neurons, modulates the degradation of NMDA receptor GRIN2B subunit. Plays a role in the regulation of neuronal excitability. The protein is Transmembrane protein 25 of Mus musculus (Mouse).